A 532-amino-acid chain; its full sequence is Carboxypeptidase Y (532 aa).

A signal peptide spans Met1–Ala20. The propeptide at Ile21 to Asn111 is mediates translocation across the endoplasmic reticulum, renders the enzyme inactive during transit, and targets the molecule to the vacuole. The short motif at Gln24–Leu27 is the Vacuolar targeting signal element. Asn124 and Asn198 each carry an N-linked (GlcNAc...) (high mannose) asparagine glycan. 5 disulfide bridges follow: Cys167-Cys409, Cys304-Cys318, Cys328-Cys351, Cys335-Cys344, and Cys373-Cys379. The active site involves Ser257. Residue Asn279 is glycosylated (N-linked (GlcNAc...) (high mannose) asparagine). Residue Asp449 is part of the active site. A substrate-binding site is contributed by Cys452. A glycan (N-linked (GlcNAc...) (high mannose) asparagine) is linked at Asn479. His508 is a catalytic residue. Position 509 (Met509) interacts with substrate.

Belongs to the peptidase S10 family. Post-translationally, enters the endoplasmic reticulum as an inactive zymogen and is modified by four N-linked core oligosaccharides, giving rise to a precursor known as P1 (67 kDa). As P1 transits through the Golgi, extension of its core oligosaccharides leads to the Golgi-modified P2 precursor (69 kDa). P2 is sorted away from secretory proteins at or beyond a late Golgi compartment and is subsequently delivered to the vacuole via a prevacuolar endosome-like compartment. Upon arrival in the vacuole, the N-terminal prosegment of P2 is cleaved by vacuolar proteases to yield the enzymatically active mature vacuolar form of CPY (61 kDa). In terms of processing, the four high mannose core N-glycans found in mature CPY are Man(11-15)GlcNAc(2) at Asn-124, Man(8-12)GlcNAc(2) at Asn-198, Man(9-14)GlcNAc(2) at Asn-279 and phosphorylated Man(12-17)GlcNAc(2) as well as Man(11-16)GlcNAc(2) at Asn-479.

It localises to the vacuole lumen. The catalysed reaction is Release of a C-terminal amino acid with broad specificity.. Its activity is regulated as follows. Inhibited by ZPCK. Vacuolar serine-type carboxypeptidase involved in degradation of small peptides. Digests preferentially peptides containing an aliphatic or hydrophobic residue in P1' position, as well as methionine, leucine or phenylalanine in P1 position of ester substrate. Also plays a role in breakdown of the autophagic body and the autophagosome-dependent protein synthesis. Plays a key role in phytochelatin (PC) synthesis from glutathione (GSH) by cleaving the Gly from GSH and form the PC-peptides of the structure (gamma-Glu-Cys)2-Gly. Also involved in resistance to xenobiotics via the degradation of glutathione-S-conjugates. This Saccharomyces cerevisiae (strain ATCC 204508 / S288c) (Baker's yeast) protein is Carboxypeptidase Y.